The chain runs to 285 residues: Nucleotide-binding protein NTHI1314 (285 aa).

8-15 provides a ligand contact to ATP; it reads GRSGAGKS. Residue 56–59 participates in GTP binding; it reads DIRN.

Belongs to the RapZ-like family.

Functionally, displays ATPase and GTPase activities. The protein is Nucleotide-binding protein NTHI1314 of Haemophilus influenzae (strain 86-028NP).